Here is a 434-residue protein sequence, read N- to C-terminus: Neuropeptide receptor 22 (434 aa).

Over 1–55 (MDEGGGIGSSLLSRITTTASEIMMRNEPTTTENPAVQEMNHIYHLTPSMKMLCIL) the chain is Extracellular. The chain crosses the membrane as a helical span at residues 56-76 (FYSILCVCCVYGNVLVILVIV). The Cytoplasmic segment spans residues 77–86 (YFKRLRTATN). A helical membrane pass occupies residues 87–107 (ILILNLAVADLLISVFCIPFS). Residues 108–128 (YWQVLIYDDQRWLFGSMMCSL) are Extracellular-facing. Cys126 and Cys204 are disulfide-bonded. The chain crosses the membrane as a helical span at residues 129-149 (LAFLQAMAVFLSAWTLVVISF). Residues 150–169 (DRWMAIMFLLTPNIRITRRR) lie on the Cytoplasmic side of the membrane. A helical membrane pass occupies residues 170–190 (ALYLVAATWIFSILMALPLLF). The Extracellular portion of the chain corresponds to 191–226 (TTRFFEDQDGLPNCGENWTYFGDSGEQVRKVYSSMV). Asn207 is a glycosylation site (N-linked (GlcNAc...) asparagine). A helical membrane pass occupies residues 227 to 247 (LILQYVVPQAVLIITYTHIGI). Residues 248–277 (KMWNSRVPGMQNGATKKMIVDRHESVKKLV) are Cytoplasmic-facing. The helical transmembrane segment at 278-298 (PMVILISALFALCWLPLLILI) threads the bilayer. Over 299-310 (NVIPEFYPDINS) the chain is Extracellular. The chain crosses the membrane as a helical span at residues 311 to 331 (WGYILYLWWFAHGLAMSHSMV). Residues 332–434 (NPIIYFIRNA…VRNNSANSLA (103 aa)) lie on the Cytoplasmic side of the membrane.

It belongs to the G-protein coupled receptor 1 family. In terms of tissue distribution, expressed in many cells, mainly in the head region, with expression detected in the head muscles, I2 neurons, MC neurons, RIH neuron, AIA neurons, AUA neurons, ASK neurons, ASI neurons, a few B-type motorneurons in the posterior ventral nerve cord, pharyngeal muscles, body wall muscles, the intestine and a few classes of unidentified cells anterior to the nerve ring. Expression in the MC neurons is important to mediate suppression of feeding while expression in the RIH neuron is important for the facilitation of egg-laying. No expression detected in other tissues including hypodermis.

Its subcellular location is the cell membrane. Receptor for the LURY-1-1 and LURY-1-2 peptides which control food-related processes including feeding, lifespan, egg-laying and roaming behavior. Receptor for flp-7 which stimulates serotonin-induced fat loss. Serotonin induces secretion of flp-7 from neurons and binding to npr-22 which leads to induction of the atgp-1 lipase and subsequent fat loss. Acts in vitro as a receptor for the flp-7 FMRFamide-like neuropeptides TPMQRSSMVRF-amide, SPMQRSSMVRF-amide, SPMERSAMVRF-amide and SPMDRSKMVRF-amide. Also acts in vitro as a receptor for a number of other FMRFamide-like neuropeptides including the flp-1 neuropeptide PNFMRY-amide, the flp-9 neuropeptide KPSFVRF-amide, the flp-11 neuropeptides AMRNALVRF-amide, ASGGMRNALVRF-amide and NGAPQPFVRF-amide, the flp-13 neuropeptides AADGAPLIRF-amide, ASPSAPLIRF-amide, SPSAVPLIRF-amide, SAAAPLIRF-amide and ASSAPLIRF-amide, and the flp-22 neuropeptide SPSAKWMRF-amide. The SPMERSAMVRF-amide neuropeptide from flp-7 acts as the strongest in vitro activator of npr-22. The polypeptide is Neuropeptide receptor 22 (Caenorhabditis elegans).